Here is a 1182-residue protein sequence, read N- to C-terminus: NACHT, LRR and PYD domains-containing protein 1a (1182 aa).

The disordered stretch occupies residues 1–23 (MEESQSKQESSTKVAQHEGQEDV). One can recognise an NACHT domain in the interval 133-442 (QLVIIEGAAG…EFFAAMSYIL (310 aa)). An ATP-binding site is contributed by 139 to 146 (GAAGIGKS). LRR repeat units lie at residues 634–655 (NLEELDLSGNPLSYYAVHSLCT), 691–711 (SLTELDLQLNDLGDGGVKMLC), and 720–743 (NLSILWLDQASLSDQVIAELRTLE). Residues 780 to 806 (QQRQQSGDKHMEPLGTEDEFWGPTGPV) form a disordered region. Residues 799–932 (FWGPTGPVTT…HYAVLENPSF (134 aa)) are ZU5. Positions 799–1082 (FWGPTGPVTT…LRPALPKIAT (284 aa)) constitute an FIIND domain. The segment at 933 to 1082 (SPMGILLRMI…LRPALPKIAT (150 aa)) is UPA. The region spanning 1092-1175 (HFMDQHREQL…HLVMDILEKL (84 aa)) is the CARD domain.

It belongs to the NLRP family. Interacts (via LRR repeats) with BCL2 and BCL2L1 (via the loop between motifs BH4 and BH3). Interacts with NOD2; this interaction is enhanced in the presence of muramyl dipeptide (MDP) and increases IL1B release. Interacts with EIF2AK2/PKR; this interaction requires EIF2AK2 activity, is accompanied by EIF2AK2 autophosphorylation and promotes inflammasome assembly in response to danger-associated signals. Interacts with MEFV; this interaction targets Nlrp1a to degradation by autophagy, hence preventing excessive IL1B- and IL18-mediated inflammation. Interacts with DPP9; leading to inhibit activation of the inflammasome. DPP9 acts via formation of a ternary complex, composed of a DPP9 homodimer, one full-length Nlrp1a protein, and one cleaved C-terminus of Nlrp1a (NACHT, LRR and PYD domains-containing protein 1a, C-terminus). Interacts with DPP8; leading to inhibit activation of the inflammasome, probably via formation of a ternary complex with DPP8. In terms of assembly, interacts with the C-terminal part of Nlrp1a (NACHT, LRR and PYD domains-containing protein 1a, C-terminus) in absence of pathogens and other damage-associated signals. As to quaternary structure, interacts with the N-terminal part of Nlrp1a (NACHT, LRR and PYD domains-containing protein 1a, N-terminus) in absence of pathogens and other damage-associated signals. Homomultimer; forms the Nlrp1a inflammasome polymeric complex, a filament composed of homopolymers of this form in response to pathogens and other damage-associated signals. Interacts (via CARD domain) with CASP1 (via CARD domain); leading to CASP1 activation. Autocatalytically cleaved. Autocatalytic cleavage in FIIND region occurs constitutively, prior to activation signals, and is required for inflammasome activity (IL1B release), possibly by facilitating CASP1 binding. Both N- and C-terminal parts remain associated non-covalently. In terms of processing, ubiquitinated in response to pathogen-associated signals, leading to its degradation by the proteasome and subsequent release of the cleaved C-terminal part of the protein (NACHT, LRR and PYD domains-containing protein 1a, C-terminus), which polymerizes and forms the Nlrp1a inflammasome. As to expression, highly expressed in hematopoietic stem cells and progenitor cells of both myeloid and lymphoid origin. The expression is highly strain-dependent. Not expressed in Balb/cJ animals, but widely expressed in C57BL/6J. Expressed in macrophages resistant to Bacillus anthracis lethal toxin, but not in toxin-sensitive macrophages, except in CAST/EiJ strain.

The protein localises to the cytoplasm. The protein resides in the cytosol. It localises to the nucleus. It is found in the inflammasome. Nlrp1a inflammasome is activated by pathogens and other damage-associated signals: activation promotes ubiquitination and degradation of the N-terminal part, releasing the cleaved C-terminal part of the protein (NACHT, LRR and PYD domains-containing protein 1a, C-terminus), which polymerizes and forms the Nlrp1a inflammasome. Nlrp1a inflammasome is inhibited by DPP8 and DPP9, which sequester the C-terminal fragment of Nlrp1a (NACHT, LRR and PYD domains-containing protein 1a, C-terminus) in a ternary complex, thereby preventing Nlrp1a oligomerization and activation. Nlrp1a inflammasome is activated by Val-boroPro (Talabostat, PT-100), an inhibitor of dipeptidyl peptidases DPP8 and DPP9. Val-boroPro relieves inhibition of DPP8 and/or DPP9 by promoting disruption of the ternary complex, releasing its C-terminal part from autoinhibition. Its function is as follows. Acts as the sensor component of the Nlrp1a inflammasome, which mediates inflammasome activation in response to various pathogen-associated signals, leading to subsequent pyroptosis. Inflammasomes are supramolecular complexes that assemble in the cytosol in response to pathogens and other damage-associated signals and play critical roles in innate immunity and inflammation. Acts as a recognition receptor (PRR): recognizes specific pathogens and other damage-associated signals, and mediates the formation of the inflammasome polymeric complex. In response to pathogen-associated signals, the N-terminal part of Nlrp1a is degraded by the proteasome, releasing the cleaved C-terminal part of the protein (NACHT, LRR and PYD domains-containing protein 1a, C-terminus), which polymerizes to initiate the formation of the inflammasome complex: the inflammasome recruits pro-caspase-1 (proCASP1) and promotes caspase-1 (CASP1) activation, which subsequently cleaves and activates inflammatory cytokines IL1B and IL18 and gasdermin-D (GSDMD), leading to pyroptosis. In the absence of GSDMD expression, the Nlrp1a inflammasome is able to recruit and activate CASP8, leading to activation of gasdermin-E (GSDME). Activation of Nlrp1a inflammasome is also required for HMGB1 secretion; the active cytokines and HMGB1 stimulate inflammatory responses. When activated in the bone marrow, induces the pyroptosis of hematopoietic stem cells and progenitor cells of both myeloid and lymphoid lineages, hence allowing the removal of damaged cells, and the release of IL1B, which induces granulopoiesis. In terms of biological role, constitutes the precursor of the Nlrp1a inflammasome, which mediates autoproteolytic processing within the FIIND domain to generate the N-terminal and C-terminal parts, which are associated non-covalently in absence of pathogens and other damage-associated signals. Functionally, regulatory part that prevents formation of the Nlrp1a inflammasome: in absence of pathogens and other damage-associated signals, interacts with the C-terminal part of Nlrp1a (NACHT, LRR and PYD domains-containing protein 1a, C-terminus), preventing activation of the Nlrp1a inflammasome. In response to pathogen-associated signals, this part is ubiquitinated and degraded by the proteasome, releasing the cleaved C-terminal part of the protein, which polymerizes and forms the Nlrp1a inflammasome. Constitutes the active part of the Nlrp1a inflammasome. In absence of pathogens and other damage-associated signals, interacts with the N-terminal part of Nlrp1a (NACHT, LRR and PYD domains-containing protein 1a, N-terminus), preventing activation of the Nlrp1a inflammasome. In response to pathogen-associated signals, the N-terminal part of Nlrp1a is degraded by the proteasome, releasing this form, which polymerizes to form the Nlrp1a inflammasome complex: the Nlrp1a inflammasome complex then directly recruits pro-caspase-1 (proCASP1) and promotes caspase-1 (CASP1) activation, leading to gasdermin-D (GSDMD) cleavage and subsequent pyroptosis. This is NACHT, LRR and PYD domains-containing protein 1a from Mus musculus (Mouse).